We begin with the raw amino-acid sequence, 150 residues long: MNIEVEMKVLDERMADVVPVYATEGSAGLDLRACLDEEVVLQPGETFLVPTGLAIYLANPAYAAVLLPRSGLGHKHGIVLGNLVGLIDSDYQGELKVSLWNRSSEPFTVKPFERIAQMVVVPIVQAGFKRVEEFVGSSRGEGGFGSTGSH.

Substrate is bound by residues 69 to 71, Asn-82, 86 to 88, and Lys-96; these read RSG and LID.

Belongs to the dUTPase family. Requires Mg(2+) as cofactor.

It carries out the reaction dUTP + H2O = dUMP + diphosphate + H(+). It participates in pyrimidine metabolism; dUMP biosynthesis; dUMP from dCTP (dUTP route): step 2/2. Functionally, this enzyme is involved in nucleotide metabolism: it produces dUMP, the immediate precursor of thymidine nucleotides and it decreases the intracellular concentration of dUTP so that uracil cannot be incorporated into DNA. The protein is Deoxyuridine 5'-triphosphate nucleotidohydrolase of Neisseria meningitidis serogroup B (strain ATCC BAA-335 / MC58).